The primary structure comprises 96 residues: Small ribosomal subunit protein bS6 (96 aa).

Belongs to the bacterial ribosomal protein bS6 family.

Binds together with bS18 to 16S ribosomal RNA. The protein is Small ribosomal subunit protein bS6 of Streptococcus pyogenes serotype M1.